The chain runs to 231 residues: MDRRVAAVGDLERRIGHRFEDRELLERALTHASVGDGAKKVRDNEVLEFIGDRVLGLLAAEALAQRFPKAKEGELAPRLNALVSRETCARVARKAELGPALRLSASSSKIGGRETDSILAGATEALMAALYQDGGLEAARKVFLDLWNDEFDRAGEGRPRDPKTALQEWAQGQGRPLPTYRVLDRTGPDHAPVFTVEVSVTGVDPAIAKGKSRQEAEKAAAKALLEREGAG.

Residues 8-135 (VGDLERRIGH…LMAALYQDGG (128 aa)) form the RNase III domain. Glu-48 contacts Mg(2+). Catalysis depends on residues Asp-52 and Glu-124. Position 124 (Glu-124) interacts with Mg(2+). The DRBM domain maps to 161 to 230 (DPKTALQEWA…AKALLEREGA (70 aa)). A disordered region spans residues 210-231 (GKSRQEAEKAAAKALLEREGAG). Residues 212 to 231 (SRQEAEKAAAKALLEREGAG) show a composition bias toward basic and acidic residues.

It belongs to the ribonuclease III family. As to quaternary structure, homodimer. The cofactor is Mg(2+).

The protein localises to the cytoplasm. It catalyses the reaction Endonucleolytic cleavage to 5'-phosphomonoester.. In terms of biological role, digests double-stranded RNA. Involved in the processing of primary rRNA transcript to yield the immediate precursors to the large and small rRNAs (23S and 16S). Processes some mRNAs, and tRNAs when they are encoded in the rRNA operon. Processes pre-crRNA and tracrRNA of type II CRISPR loci if present in the organism. This Caulobacter vibrioides (strain ATCC 19089 / CIP 103742 / CB 15) (Caulobacter crescentus) protein is Ribonuclease 3.